A 246-amino-acid chain; its full sequence is 1-(5-phosphoribosyl)-5-[(5-phosphoribosylamino)methylideneamino] imidazole-4-carboxamide isomerase (246 aa).

Asp8 (proton acceptor) is an active-site residue. Residue Asp131 is the Proton donor of the active site.

Belongs to the HisA/HisF family.

It is found in the cytoplasm. It catalyses the reaction 1-(5-phospho-beta-D-ribosyl)-5-[(5-phospho-beta-D-ribosylamino)methylideneamino]imidazole-4-carboxamide = 5-[(5-phospho-1-deoxy-D-ribulos-1-ylimino)methylamino]-1-(5-phospho-beta-D-ribosyl)imidazole-4-carboxamide. Its pathway is amino-acid biosynthesis; L-histidine biosynthesis; L-histidine from 5-phospho-alpha-D-ribose 1-diphosphate: step 4/9. In Lactococcus lactis subsp. cremoris (strain MG1363), this protein is 1-(5-phosphoribosyl)-5-[(5-phosphoribosylamino)methylideneamino] imidazole-4-carboxamide isomerase.